Reading from the N-terminus, the 240-residue chain is UDP-2,3-diacylglucosamine hydrolase (240 aa).

Asp8, His10, Asp41, Asn79, and His114 together coordinate Mn(2+). 79-80 (NR) lines the substrate pocket. Positions 122, 160, 164, 167, and 195 each coordinate substrate. Mn(2+) is bound by residues His195 and His197.

It belongs to the LpxH family. Mn(2+) serves as cofactor.

It localises to the cell inner membrane. The catalysed reaction is UDP-2-N,3-O-bis[(3R)-3-hydroxytetradecanoyl]-alpha-D-glucosamine + H2O = 2-N,3-O-bis[(3R)-3-hydroxytetradecanoyl]-alpha-D-glucosaminyl 1-phosphate + UMP + 2 H(+). The protein operates within glycolipid biosynthesis; lipid IV(A) biosynthesis; lipid IV(A) from (3R)-3-hydroxytetradecanoyl-[acyl-carrier-protein] and UDP-N-acetyl-alpha-D-glucosamine: step 4/6. In terms of biological role, hydrolyzes the pyrophosphate bond of UDP-2,3-diacylglucosamine to yield 2,3-diacylglucosamine 1-phosphate (lipid X) and UMP by catalyzing the attack of water at the alpha-P atom. Involved in the biosynthesis of lipid A, a phosphorylated glycolipid that anchors the lipopolysaccharide to the outer membrane of the cell. This Shigella dysenteriae serotype 1 (strain Sd197) protein is UDP-2,3-diacylglucosamine hydrolase.